A 203-amino-acid polypeptide reads, in one-letter code: Ribonuclease HII (203 aa).

An RNase H type-2 domain is found at 18–203 (GHYAGVDEVG…SFRPVREALA (186 aa)). Positions 24, 25, and 116 each coordinate a divalent metal cation.

The protein belongs to the RNase HII family. Mn(2+) serves as cofactor. It depends on Mg(2+) as a cofactor.

Its subcellular location is the cytoplasm. It catalyses the reaction Endonucleolytic cleavage to 5'-phosphomonoester.. Functionally, endonuclease that specifically degrades the RNA of RNA-DNA hybrids. This is Ribonuclease HII from Shewanella halifaxensis (strain HAW-EB4).